A 127-amino-acid polypeptide reads, in one-letter code: Mini-ribonuclease 3-like protein (127 aa).

The active site involves Asp-19.

Belongs to the MrnC RNase family.

Its function is as follows. Might be a ribonuclease involved in RNA processing. The chain is Mini-ribonuclease 3-like protein (mrnCL) from Ilyobacter polytropus (strain ATCC 51220 / DSM 2926 / LMG 16218 / CuHBu1).